A 951-amino-acid chain; its full sequence is 5'-3' exoribonuclease 2 (951 aa).

The CCHC-type zinc finger occupies 262–278; it reads PCALCNQFGHEVKDCEG. Lys286 is modified (N6-acetyllysine). Residues 408 to 508 are disordered; it reads KDDEDSFRRR…SDSEPEPEDN (101 aa). The span at 416–426 shows a compositional bias: basic residues; that stretch reads RRQKEKRKRMK. Thr439 is subject to Phosphothreonine. 2 stretches are compositionally biased toward polar residues: residues 445 to 458 and 467 to 485; these read SRNS…SNPR and QRNS…SDGS. Phosphoserine occurs at positions 448, 471, 473, 475, 482, 487, 499, 501, and 678. An asymmetric dimethylarginine; alternate mark is found at Arg824, Arg847, and Arg851. Residues Arg824, Arg847, and Arg851 each carry the omega-N-methylarginine; alternate modification. At Arg880 the chain carries Asymmetric dimethylarginine. Position 883 is an asymmetric dimethylarginine; alternate (Arg883). Arg883 is subject to Omega-N-methylarginine; alternate. Omega-N-methylarginine is present on Arg895. The interval 907-951 is disordered; sequence NQYQMLGGPGGYPPRRDDHRGGRQGYPREGRKYPLPPPSGRYSWN. Basic and acidic residues predominate over residues 920-938; it reads PRRDDHRGGRQGYPREGRK. Position 947 is an asymmetric dimethylarginine; alternate (Arg947). Arg947 carries the omega-N-methylarginine; alternate modification.

The protein belongs to the 5'-3' exonuclease family. XRN2/RAT1 subfamily. Interacts with POLR2A and SMN1/SMN2. Interacts with CDKN2AIP and NKRF. Interacts with CDKN2AIPNL; the interaction is direct. Interacts with TRIM71 (via NHL repeats) in an RNA-dependent manner. Interacts with DHX34; the interaction is RNA-independent. As to expression, expressed in the spleen, testis, heart, brain, lung, liver, skeletal muscle, and kidney.

It localises to the nucleus. Its subcellular location is the nucleolus. In terms of biological role, possesses 5'-&gt;3' exoribonuclease activity. May promote the termination of transcription by RNA polymerase II. During transcription termination, cleavage at the polyadenylation site liberates a 5' fragment which is subsequently processed to form the mature mRNA and a 3' fragment which remains attached to the elongating polymerase. The processive degradation of this 3' fragment by this protein may promote termination of transcription. Binds to RNA polymerase II (RNAp II) transcription termination R-loops formed by G-rich pause sites. This is 5'-3' exoribonuclease 2 (Xrn2) from Mus musculus (Mouse).